The following is a 183-amino-acid chain: Transmembrane and coiled-coil domain-containing protein 2 (183 aa).

The helical transmembrane segment at 54 to 74 (VQIILGISFLTLLAIGLFALW) threads the bilayer. Positions 127–150 (GLQEKILKKLQMVENKVRDLEGII) form a coiled coil.

Its subcellular location is the membrane. The protein is Transmembrane and coiled-coil domain-containing protein 2 (Tmco2) of Mus musculus (Mouse).